The primary structure comprises 69 residues: Cold shock protein CapB (69 aa).

The region spanning 7–66 (GTVKWFNDEKGFGFITPQSGDDLFVHFKAIQSDGFKSLKEGQQVSFIATRGQKGMQAEEV) is the CSD domain.

The protein localises to the cytoplasm. Affects cell viability at low temperatures. In Pseudomonas fragi, this protein is Cold shock protein CapB (capB).